The primary structure comprises 688 residues: Homoaconitase, mitochondrial (688 aa).

The transit peptide at 1–19 (MALLYLSTRSSLKKTGARC) directs the protein to the mitochondrion. C346, C406, and C409 together coordinate [4Fe-4S] cluster.

Belongs to the aconitase/IPM isomerase family. [4Fe-4S] cluster serves as cofactor.

It localises to the mitochondrion. It carries out the reaction (2R,3S)-homoisocitrate = cis-homoaconitate + H2O. It participates in amino-acid biosynthesis; L-lysine biosynthesis via AAA pathway; L-alpha-aminoadipate from 2-oxoglutarate: step 3/5. Functionally, catalyzes the reversible hydration of cis-homoaconitate to (2R,3S)-homoisocitrate, a step in the alpha-aminoadipate pathway for lysine biosynthesis. The chain is Homoaconitase, mitochondrial (LYS4) from Debaryomyces hansenii (strain ATCC 36239 / CBS 767 / BCRC 21394 / JCM 1990 / NBRC 0083 / IGC 2968) (Yeast).